The chain runs to 459 residues: Polycomb protein mes-6 (459 aa).

5 WD repeats span residues 146–186, 192–231, 305–346, 370–409, and 415–454; these read SVGW…CLIV, CHAGTILSVDWSTDGDFILSCGFDHQLMEWDLSVKQVKEH, MHSD…GEVE, SGSAWFIKFAVDPRRRWLVCGGAGGSVMFFDLRNNEETNP, and VGSRTVRQASFSTCGRFLVLVTDEGFVCRFDRVSASVDAK.

The protein belongs to the WD repeat ESC family. As to quaternary structure, interacts directly with the N-terminal domain of mes-2. Forms a heterotrimeric complex with mes-2 and mes-3. Does not interact with mes-4. In terms of tissue distribution, in adults, it is predominantly expressed in the germline, and weakly expressed in intestinal cells.

It localises to the nucleus. Functionally, polycomb group (PcG) protein. PcG proteins act by forming multiprotein complexes, which are required to maintain the transcriptionally repressive state of homeotic genes throughout development. In association with the nfya-1-NF-Y complex, may play a role in repressing the expression of the homeobox protein egl-5 in tissues such as the head. PcG proteins are not required to initiate repression, but to maintain it during later stages of development. The mes-2/mes-3/mes-6 complex may participate in the global inactivation of the X chromosomes in germline cells. The complex may act via methylation of histone H3 'Lys-27', rendering chromatin heritably changed in its expressibility. This complex is required to exclude mes-4 from the inactivated X-chromosomes in germline cells. Required for small-RNA-induced H3K27 trimethylation. This is Polycomb protein mes-6 from Caenorhabditis elegans.